An 850-amino-acid polypeptide reads, in one-letter code: MDTTLPPPQHMEREPLKSKSSLLPMTRRGNGSKGQKILLLTNHFRVNFRKPNSHNFFHYSVTITYEDGSPLLAKGFGRKILEKVQQTCQADLGCKHFAYDGDKNLYTVGPLPRSSLDFSVVLETAPSRRNADKRLKLPHQSKKFNVAILFAPPEIPMEAIANALQGKKTKHLLDAIRVMDCILSQNAARQGCLLVRQSFFHNDAKYFANIGEGVDCCKGFHSSFRTTQGGLSLNIDVSTAMIVKPGPVVDFLIANQGVNDPFSINWKKAKNTLKNLRVKVLPSNQEYKITGLSGLHCKDQTFTWKKRNQNREFEEVEITVSDYFTRIREIELRYSGGLPCINVGKPNRPTYFPIELCELVSLQRYTKALTKFQRSNLIKESRQNPQQRIGVLTRALKTSNYNDDPMLQECGVRIGSDFTQVEGRVLPTPKLKAGKEQDIYPINGSWNFKNKPATVTRWAVVNFSARCDPQKIIDDLTRCGKMKGINVDSPYHVVFEENPQFKDATGSVRVDKMFQHLQSILGEVPPKFLLCILEKKNSDVYEKSCSMWNCECIVPPQNLNDQYLTNLLLKINAKLGGLNSVLDMELSGTMPLVMRVPTIIIGMDVSHGSPGQSDHIPSIAAVVSSREWPLISKYRACVRTQSPKVEMIDSLFKPVSDKDDQGIMRELLLDFHSSSGKKPNHIIIFRDGVSESQFNQVLNIELDQMMQINHHTKFFQTESPNNVLPGTIIDSNICHQHNNDFYLCAHAGKIGTTRPTHYHVLYDEIGFDTDQLQELVHSLSYVYQRSTTAISLVAPICYAHLAAAQMATAMKFEDMSETSSSHGGITTAGAVPVPPMPKLNTNVASSMFFC.

Positions 1–30 (MDTTLPPPQHMEREPLKSKSSLLPMTRRGN) are disordered. Residues 247–361 (PVVDFLIANQ…FPIELCELVS (115 aa)) form the PAZ domain. The region spanning 518-811 (QSILGEVPPK…AAAQMATAMK (294 aa)) is the Piwi domain.

This sequence belongs to the argonaute family. Ago subfamily.

Functionally, involved in RNA-mediated post-transcriptional gene silencing (PTGS). Main component of the RNA-induced silencing complex (RISC) that binds to a short guide RNA such as a microRNA (miRNA) or small interfering RNA (siRNA). RISC uses the mature miRNA or siRNA as a guide for slicer-directed cleavage of homologous mRNAs to repress gene expression. The sequence is that of Protein argonaute 8 (AGO8) from Arabidopsis thaliana (Mouse-ear cress).